The sequence spans 860 residues: Anoctamin-7 (860 aa).

Topologically, residues 1-297 (MLRKQAGEED…YFAWLGFYTG (297 aa)) are cytoplasmic. A disordered region spans residues 24–50 (NGCSYGSTAQASEAGKQQVAPSRVGSS). A helical membrane pass occupies residues 298–318 (WLLPAAVVGTVVFLAGCFLVF). The Extracellular portion of the chain corresponds to 319–362 (SDVPTQELCHSSDTFDMCPLCSDCSFWLLSSACTLAQAGRLFDH). A helical transmembrane segment spans residues 363 to 383 (GGTVFFSLFMALWAVLLLEYW). Topologically, residues 384-441 (KRKNATLAYRWDCSDYEDIEERPRPQFAATAPMTALNPITGEDEPYFPEKNRVRRMLA) are cytoplasmic. A helical membrane pass occupies residues 442–462 (GSVVLLMMVAVVIMCLVSIIL). Residues 463–492 (YRAVMAIIVSKSNNAFLSAWASRIASLTGS) are Extracellular-facing. Residues 493–513 (VVNLVFILILSKVYVILAQVL) traverse the membrane as a helical segment. The Cytoplasmic portion of the chain corresponds to 514–530 (TRWEMHRTQTAFEDAFT). A helical transmembrane segment spans residues 531-551 (LKVFIFQFVNFYASPVYIAFF). At 552–652 (KGRFVGYPGN…FHEYLEMVLQ (101 aa)) the chain is on the extracellular side. The chain crosses the membrane as a helical span at residues 653-673 (FGFVTIFVAACPLAPLFALLN). Residues 674–701 (NWVEIRLDARKFVCEYRRPVAERAQDIG) lie on the Cytoplasmic side of the membrane. A helical membrane pass occupies residues 702 to 722 (IWFHILAGLTHLAVISNAFLL). The Extracellular portion of the chain corresponds to 723–779 (AFSSDFLPRVYYSWTRAPDLRGFLNFTLARAPPTFTSAHNRTCRYRAFRDDDGHYSP). N-linked (GlcNAc...) asparagine glycosylation is found at N747 and N762. The chain crosses the membrane as a helical span at residues 780-800 (TYWTLLAIRLAFVIVFEHVVF). Residues 801 to 860 (STGRFLDLLVPDIPESVEIKVKREYYLAKQALADNEALLGATGVKGEQPPSSEPSLGLPA) lie on the Cytoplasmic side of the membrane.

It belongs to the anoctamin family.

Its subcellular location is the cell membrane. It is found in the endoplasmic reticulum. It carries out the reaction a 1,2-diacyl-sn-glycero-3-phospho-L-serine(in) = a 1,2-diacyl-sn-glycero-3-phospho-L-serine(out). It catalyses the reaction a beta-D-galactosyl-(1&lt;-&gt;1')-N-acylsphing-4-enine(out) = a beta-D-galactosyl-(1&lt;-&gt;1')-N-acylsphing-4-enine(in). The catalysed reaction is a 1,2-diacyl-sn-glycero-3-phosphocholine(in) = a 1,2-diacyl-sn-glycero-3-phosphocholine(out). Its function is as follows. Has calcium-dependent phospholipid scramblase activity; scrambles phosphatidylserine, phosphatidylcholine and galactosylceramide. Does not exhibit calcium-activated chloride channel (CaCC) activity. May play a role in cell-cell interactions. The sequence is that of Anoctamin-7 (Ano7) from Rattus norvegicus (Rat).